A 271-amino-acid chain; its full sequence is Ribosomal RNA small subunit methyltransferase A (271 aa).

S-adenosyl-L-methionine is bound by residues histidine 11, leucine 13, glycine 38, glutamate 58, aspartate 86, and asparagine 101.

The protein belongs to the class I-like SAM-binding methyltransferase superfamily. rRNA adenine N(6)-methyltransferase family. RsmA subfamily.

The protein localises to the cytoplasm. It catalyses the reaction adenosine(1518)/adenosine(1519) in 16S rRNA + 4 S-adenosyl-L-methionine = N(6)-dimethyladenosine(1518)/N(6)-dimethyladenosine(1519) in 16S rRNA + 4 S-adenosyl-L-homocysteine + 4 H(+). Functionally, specifically dimethylates two adjacent adenosines (A1518 and A1519) in the loop of a conserved hairpin near the 3'-end of 16S rRNA in the 30S particle. May play a critical role in biogenesis of 30S subunits. The chain is Ribosomal RNA small subunit methyltransferase A from Helicobacter pylori (strain P12).